The following is a 38-amino-acid chain: Potassium channel toxin alpha-KTx 6.4 (38 aa).

4 disulfide bridges follow: C6–C27, C12–C32, C16–C34, and C22–C37.

This sequence belongs to the short scorpion toxin superfamily. Potassium channel inhibitor family. Alpha-KTx 06 subfamily. In terms of tissue distribution, expressed by the venom gland.

The protein resides in the secreted. Potently, completely and reversibly blocks voltage-gated potassium channel Kv1.2/KCNA2 and Shaker B (Sh). Also blocks small conductance (SK) calcium-activated potassium channel (KCNN). This chain is Potassium channel toxin alpha-KTx 6.4, found in Pandinus imperator (Emperor scorpion).